The chain runs to 298 residues: Protoheme IX farnesyltransferase (298 aa).

9 helical membrane-spanning segments follow: residues 16–36, 45–65, 93–113, 114–134, 141–161, 172–192, 223–243, 244–264, and 277–297; these read VVALIVFTALVGMFLAIPDMP, ALGFLGIWLAASAAAAINQLL, VFAGALIVISMTILVVWVNVI, TAVLTFASLIGYAVIYTVYLK, IVIGGLAGATPPMLGWAAVTG, SLLVLIIFIWTPPHFWALAIF, VLLAIVTLAPVAVGMSGVFYL, GGAIVLNAVFLWYAWRMLNPP, and IVYLMALFAFLMVDHLLLPWV.

It belongs to the UbiA prenyltransferase family. Protoheme IX farnesyltransferase subfamily.

It localises to the cell inner membrane. It carries out the reaction heme b + (2E,6E)-farnesyl diphosphate + H2O = Fe(II)-heme o + diphosphate. It participates in porphyrin-containing compound metabolism; heme O biosynthesis; heme O from protoheme: step 1/1. Converts heme B (protoheme IX) to heme O by substitution of the vinyl group on carbon 2 of heme B porphyrin ring with a hydroxyethyl farnesyl side group. This Xanthomonas euvesicatoria pv. vesicatoria (strain 85-10) (Xanthomonas campestris pv. vesicatoria) protein is Protoheme IX farnesyltransferase.